Reading from the N-terminus, the 160-residue chain is Putative pre-16S rRNA nuclease (160 aa).

It belongs to the YqgF nuclease family.

Its subcellular location is the cytoplasm. Its function is as follows. Could be a nuclease involved in processing of the 5'-end of pre-16S rRNA. The protein is Putative pre-16S rRNA nuclease of Rhodopseudomonas palustris (strain HaA2).